The following is a 359-amino-acid chain: Type-1 angiotensin II receptor (359 aa).

Residues 1–25 lie on the Extracellular side of the membrane; sequence MMLNSSTEDGIKRIQDDCPKAGRHN. N-linked (GlcNAc...) asparagine glycosylation is present at asparagine 4. Angiotensin II is bound by residues glutamine 15 and aspartate 17. 2 disulfide bridges follow: cysteine 18–cysteine 274 and cysteine 101–cysteine 180. The helical transmembrane segment at 26-55 threads the bilayer; it reads YIFVMIPTLYSIIFVVGIFGNSLAVIVIYF. Residues 56-61 are Cytoplasmic-facing; sequence YMKLKT. The helical transmembrane segment at 62 to 89 threads the bilayer; sequence VASVFLLNLALADLCFLLTLPLWAVYTA. At 90 to 98 the chain is on the extracellular side; it reads MEYRWPFGN. The helical transmembrane segment at 99–125 threads the bilayer; sequence YLCKIASASVSFNLYASVFLLTCLSID. At 126–141 the chain is on the cytoplasmic side; that stretch reads RYLAIVHPMKSRLRRT. Residues 142 to 165 traverse the membrane as a helical segment; that stretch reads MLVAKVTCIIIWLLAGLASLPAII. At 166–190 the chain is on the extracellular side; it reads HRNVFFIENTNITVCAFHYESQNST. Position 167 (arginine 167) interacts with angiotensin II. An N-linked (GlcNAc...) asparagine glycan is attached at asparagine 176. 3 residues coordinate angiotensin II: phenylalanine 182, histidine 183, and tyrosine 184. Residue asparagine 188 is glycosylated (N-linked (GlcNAc...) asparagine). The chain crosses the membrane as a helical span at residues 191 to 216; sequence LPIGLGLTKNILGFLFPFLIILTSYT. Angiotensin II is bound at residue lysine 199. Topologically, residues 217 to 239 are cytoplasmic; the sequence is LIWKALKKAYEIQKNKPRNDDIF. The chain crosses the membrane as a helical span at residues 240-268; the sequence is KIIMAIVLFFFFSWVPHQIFTFLDVLIQL. The Extracellular segment spans residues 269-278; the sequence is GVIHDCRIAD. A helical membrane pass occupies residues 279–304; sequence IVDTAMPITICIAYFNNCLNPLFYGF. Residues 305 to 359 are Cytoplasmic-facing; it reads LGKKFKKYFLQLLKYIPPKAKSHSNLSTKMSTLSYRPSDNVSSSSKKPVPCFEVE. Residues 335 to 350 show a composition bias toward polar residues; it reads STLSYRPSDNVSSSSK. The tract at residues 335–359 is disordered; the sequence is STLSYRPSDNVSSSSKKPVPCFEVE. Cysteine 355 carries S-palmitoyl cysteine lipidation.

Belongs to the G-protein coupled receptor 1 family. As to quaternary structure, interacts with MAS1. Interacts with ARRB1. Interacts with FLNA (via filamin repeat 21); increases PKA-mediated phosphorylation of FLNA. In terms of processing, C-terminal Ser or Thr residues may be phosphorylated.

Its subcellular location is the cell membrane. Functionally, receptor for angiotensin II, a vasoconstricting peptide, which acts as a key regulator of blood pressure and sodium retention by the kidney. The activated receptor in turn couples to G-alpha proteins G(q) (GNAQ, GNA11, GNA14 or GNA15) and thus activates phospholipase C and increases the cytosolic Ca(2+) concentrations, which in turn triggers cellular responses such as stimulation of protein kinase C. In Oryctolagus cuniculus (Rabbit), this protein is Type-1 angiotensin II receptor (AGTR1).